The following is a 262-amino-acid chain: Ubiquitin thioesterase otubain-like (262 aa).

Residues 64-262 enclose the OTU domain; that stretch reads KFIRRTRPDG…PGHYDILYPN (199 aa). Asp72 is a catalytic residue. Catalysis depends on Cys75, which acts as the Nucleophile. Ile168 is a substrate binding site. The active site involves His255.

The protein belongs to the peptidase C65 family.

It catalyses the reaction Thiol-dependent hydrolysis of ester, thioester, amide, peptide and isopeptide bonds formed by the C-terminal Gly of ubiquitin (a 76-residue protein attached to proteins as an intracellular targeting signal).. Functionally, possible hydrolase that can remove conjugated ubiquitin from proteins in vitro and may therefore play an important regulatory role at the level of protein turnover by preventing degradation. The protein is Ubiquitin thioesterase otubain-like of Drosophila melanogaster (Fruit fly).